The chain runs to 468 residues: UDP-N-acetylmuramoylalanine--D-glutamate ligase (468 aa).

117–123 contacts ATP; the sequence is GTDGKTT.

This sequence belongs to the MurCDEF family.

The protein resides in the cytoplasm. It carries out the reaction UDP-N-acetyl-alpha-D-muramoyl-L-alanine + D-glutamate + ATP = UDP-N-acetyl-alpha-D-muramoyl-L-alanyl-D-glutamate + ADP + phosphate + H(+). Its pathway is cell wall biogenesis; peptidoglycan biosynthesis. Its function is as follows. Cell wall formation. Catalyzes the addition of glutamate to the nucleotide precursor UDP-N-acetylmuramoyl-L-alanine (UMA). This is UDP-N-acetylmuramoylalanine--D-glutamate ligase from Chloroherpeton thalassium (strain ATCC 35110 / GB-78).